The sequence spans 255 residues: Small ribosomal subunit protein uS2 (255 aa).

Belongs to the universal ribosomal protein uS2 family.

This chain is Small ribosomal subunit protein uS2, found in Streptococcus thermophilus (strain CNRZ 1066).